The sequence spans 185 residues: Elongation factor P (185 aa).

This sequence belongs to the elongation factor P family.

The protein localises to the cytoplasm. It functions in the pathway protein biosynthesis; polypeptide chain elongation. Involved in peptide bond synthesis. Stimulates efficient translation and peptide-bond synthesis on native or reconstituted 70S ribosomes in vitro. Probably functions indirectly by altering the affinity of the ribosome for aminoacyl-tRNA, thus increasing their reactivity as acceptors for peptidyl transferase. The polypeptide is Elongation factor P (Trichodesmium erythraeum (strain IMS101)).